Here is a 7059-residue protein sequence, read N- to C-terminus: Replicase polyprotein 1ab (7059 aa).

Positions 54–196 (PENHVMVDCR…PWVMYLRKCG (143 aa)) constitute a CoV Nsp1 globular domain. Residues 216–246 (FKVEDAYDLVHDEPKGKFSKKAYALIRGYRG) enclose the BetaCoV Nsp1 C-terminal domain. The CoV Nsp2 N-terminal domain maps to 250-519 (LLYVDQYGCD…LICKALYLDY (270 aa)). Zn(2+) is bound by residues C392, C397, C413, and C416. Residues 392 to 416 (CEQDLCDFKGWVPGNMIDGFACTTC) are C4. Positions 524–713 (CGNLHQRELL…AQAFRSGAKV (190 aa)) constitute a CoV Nsp2 middle domain. The region spanning 733–851 (RRRICLSGSK…LDQAWRVPCA (119 aa)) is the CoV Nsp2 C-terminal domain. Positions 853-966 (RCVTFKEQPT…LYCAFTAPED (114 aa)) constitute a Ubiquitin-like 1 domain. Residues 972-986 (ESGVEEDDVEGEETD) show a composition bias toward acidic residues. The tract at residues 972-1000 (ESGVEEDDVEGEETDLTVTSAGEPCVASE) is disordered. One can recognise a Peptidase C16 1 domain in the interval 1036-1274 (DLESVIQDYE…IAQLYGSCIT (239 aa)). The active-site For PL1-PRO activity is C1074. Residues C1151, C1154, C1177, and C1179 each contribute to the Zn(2+) site. A C4-type 1 zinc finger spans residues 1151-1179 (CIKCDLALKLKGLDAMFFYGDVVSHVCKC). Catalysis depends on for PL1-PRO activity residues H1225 and D1236. Residues 1275–1435 (PNVCFVKGDI…LISKCQITAV (161 aa)) form the Macro domain. The region spanning 1491 to 1563 (DDARTFVQSN…VAQIKALFLD (73 aa)) is the DPUP domain. Positions 1562 to 1617 (LDKVDILLTVDGVNFTNRFVPVGESFGKSLGNVFCDGVNVTKHKCDINYKGKVFFQ) constitute a Ubiquitin-like 2 domain. The 262-residue stretch at 1631–1892 (SSFNFDQKEL…KIEYKPDLSQ (262 aa)) folds into the Peptidase C16 2 domain. C1671 serves as the catalytic For PL2-PRO activity. The Zn(2+) site is built by C1749, C1751, C1783, and C1785. Residues 1749-1785 (CKCGVKQEQRTGVDAVMHFGTLSREDLEIGYTVDCSC) form a C4-type 2 zinc finger. Catalysis depends on for PL2-PRO activity residues H1828 and D1842. The Nucleic acid-binding domain occupies 1906 to 2007 (IKAQFKTFEK…TYFNRPLLVD (102 aa)). Residues 2020-2169 (DDGGDISESD…ADNKVIYTTE (150 aa)) form the G2M domain. 3 consecutive transmembrane segments (helical) span residues 2138 to 2158 (ISACFNFIKWLFVLLFGWIKI), 2199 to 2219 (ACIIATIFLLWFNFIYANVIF), and 2221 to 2241 (DFYLPKIGFLPTFVGKIVQWI). An HD1 region spans residues 2138-2385 (ISACFNFIKW…ASFIKLFSLF (248 aa)). A 3Ecto domain is found at 2235 to 2296 (GKIVQWIKNT…AIDVVQYEAD (62 aa)). Cystine bridges form between C2251–C2275 and C2266–C2272. The next 3 membrane-spanning stretches (helical) occupy residues 2313–2333 (LIVSYALYTAWFYPLFALISI), 2343–2363 (LLMLSTLHWSVRLLVSLANML), and 2365–2385 (AHVFMRFYIIIASFIKLFSLF). Residues 2383–2473 (SLFRHVAYGC…ELKRPIQPTD (91 aa)) are Y1. A CoV Nsp3 Y domain is found at 2383 to 2750 (SLFRHVAYGC…LTTPFSLKGG (368 aa)). Zn(2+)-binding residues include H2387, C2392, C2397, C2400, C2433, H2436, C2440, and C2443. The interval 2387–2400 (HVAYGCSKSGCLFC) is ZF1. Residues 2433–2443 (CSKHQWNCIDC) form a ZF2 region. Residues 2474-2566 (VAYHTVTDVK…MVDKILITTA (93 aa)) form a Y2 region. Positions 2474-2750 (VAYHTVTDVK…LTTPFSLKGG (277 aa)) are coV-Y. The interval 2567–2649 (NTGTSVTETM…DSVMSAVSAG (83 aa)) is Y3. A Y4 region spans residues 2650-2750 (LELTDESCNN…LTTPFSLKGG (101 aa)). 7 consecutive transmembrane segments (helical) span residues 2752-2772 (VFSYFVYVCFVLSLVCFIGLW), 2824-2844 (STFGLSYYSNSMACPIVVAVV), 3009-3029 (VFDLIYQLFKGLAQPVDFLAL), 3031-3051 (ASSIAGAILAVIVVLGFYYLI), 3063-3083 (IVFVNVIVWCVNFMMLFVFQV), 3090-3110 (VYAICYFYATLYFPSEISVIM), and 3115-3135 (LVMYGTIMPLWFCLLYISVVV). The HD2 stretch occupies residues 2752 to 3135 (VFSYFVYVCF…FCLLYISVVV (384 aa)). The Nsp4C domain maps to 3149 to 3246 (LGTSVRSDGT…TASVSTSFLQ (98 aa)). In terms of domain architecture, Peptidase C30 spans 3247–3549 (SGIVKMVNPT…YQQLAGIKLQ (303 aa)). Catalysis depends on for 3CL-PRO activity residues H3287 and C3391. The tract at residues 3319–3775 (LSLTVMSYQM…IISCYWGLFS (457 aa)) is HD3. 7 helical membrane passes run 3558-3578 (GIVCWIMASTFLFSCIITAFV), 3588-3608 (TNMLSITFCALCVISLAMLLV), 3615-3635 (LTMYIIPVLFTLLYNNYLVVY), 3657-3677 (TYTDEVIYGMLLLIGMVFVTL), 3684-3704 (LFSFIMFVGRVISVVSLWYMG), 3711-3731 (ILLMLASLFGTYTWTTALSMA), and 3755-3775 (IVLVCYLFIGYIISCYWGLFS). Positions 3837-3925 (SKLTDVKCAN…DYAKDNTVLQ (89 aa)) constitute a RdRp Nsp7 cofactor domain. One can recognise a RdRp Nsp8 cofactor domain in the interval 3926 to 4122 (ALQSEFVNMA…HNEVSATVLQ (197 aa)). Residues 4123 to 4232 (NNELMPAKLK…GTISSTVRLQ (110 aa)) form the Nsp9 ssRNA-binding domain. Positions 4233 to 4370 (AGTATEYASN…CVSTDTTVQS (138 aa)) constitute an ExoN/MTase coactivator domain. Positions 4306, 4309, 4315, 4322, 4348, 4351, 4359, and 4361 each coordinate Zn(2+). Zinc fingers lie at residues 4306–4322 (CIYCRARVEHPDVDGLC) and 4348–4361 (CQVCGFWRDGSCSC). The NiRAN domain occupies 4375-4630 (FLNRVRGTSV…DCELYVNNAY (256 aa)). Mn(2+) contacts are provided by N4578 and D4587. The region spanning 4631–4729 (RLFDLVQYDF…MNMDVDTHRY (99 aa)) is the Nsp12 Interface domain. H4660, C4666, C4671, C4675, and C4852 together coordinate Zn(2+). Positions 4730–5297 (RLSLKDLLLY…NMYLRSAVMQ (568 aa)) constitute a Nsp12 RNA-dependent RNA polymerase domain. The segment at 4732–4946 (SLKDLLLYAA…HQKCLKSIAA (215 aa)) is rdRp Fingers N-ter. Residues 4947-4985 (TRGVPVVIGTTKFYGGWDDMLRRLIKDVDNPVLMGWDYP) are rdRp Palm N-ter. A RdRp catalytic domain is found at 4977–5139 (PVLMGWDYPK…CYNSDYASKG (163 aa)). The interval 4986–5044 (KCDRAMPNILRIVSSLVLARKHEACCSQSDRFYRLANECAQVLSEIVMCGGCYYVKPGG) is rdRp Fingers C-ter. Residues H5007, C5010, and C5011 each coordinate Zn(2+). The tract at residues 5045 to 5180 (TSSGDATTAF…NNGPHEFCSQ (136 aa)) is rdRp Palm C-ter. Residues S5124, D5125, and D5126 contribute to the active site. The tract at residues 5181–5297 (HTMLVKMDGD…NMYLRSAVMQ (117 aa)) is rdRp Thumb. Positions 5298 to 5410 (SVGACVVCSS…DDFNRIASCK (113 aa)) constitute a CV ZBD domain. Positions 5302, 5305, 5313, 5316, 5323, 5326, 5330, 5336, 5347, 5352, 5369, and 5372 each coordinate Zn(2+). Residues 5553-5734 (SVLETFQNNV…MCCLGPDIFL (182 aa)) form the (+)RNA virus helicase ATP-binding domain. An ATP-binding site is contributed by 5578-5585 (GPPGTGKS). Residues 5735-5904 (GTCYRCPKEI…VETRVQCSTN (170 aa)) enclose the (+)RNA virus helicase C-terminal domain. In terms of domain architecture, ExoN spans 5971-6186 (LFITKEEAVK…RCLAVYDCFC (216 aa)). Active-site residues include D5989, E5991, and E6090. Zn(2+) is bound by residues H6156, C6160, and H6163. Residues H6167 and D6172 contribute to the active site. C6178 contacts Zn(2+). Positions 6195-6421 (YPIISNELSI…NLWNTFTKLQ (227 aa)) constitute an N7-MTase domain. 6230 to 6236 (DIGNPKA) is an S-adenosyl-L-methionine binding site. Positions 6308–6322 (CNGGSLYVNKHAFHT) are gpppA-binding. The Zn(2+) site is built by C6346, C6367, C6378, and H6381. The region spanning 6422-6482 (SLENVVYNLV…NVAVELFAKR (61 aa)) is the Nsp15 N-terminal oligomerization domain. Residues 6483–6603 (SIRHHPELKL…FAVRKEGQDV (121 aa)) enclose the AV-Nsp11N/CoV-Nsp15M domain. A NendoU domain is found at 6653–6792 (TCRTDMEKDF…NDEKVMTFYP (140 aa)). Catalysis depends on residues H6683, H6698, K6738, K6841, D6935, K6971, and E7004. Positions 6797-7059 (ASDWKPGYSM…NSRLSWLVMP (263 aa)) constitute a Nidovirus-type SAM-dependent 2'-O-MTase domain.

It belongs to the coronaviruses polyprotein 1ab family. Interacts with host PHB and PHB2. In terms of assembly, interacts with papain-like protease nsp3 and non-structural protein 6. As to quaternary structure, monomer. Homodimer. Only the homodimer shows catalytic activity. Interacts with nsp8 and nsp12 to form the replication-transcription complex (RTC): nsp12, nsp7, two subunits of nsp8, and up to two subunits of nsp13. In terms of assembly, interacts with nsp7, nsp13 and nsp12 to form the replication-transcription complex (RTC): nsp12, nsp7, two subunits of nsp8, and up to two subunits of nsp13. As to quaternary structure, interacts with nsp12. Interacts with proofreading exoribonuclease nsp14 and 2'-O-methyltransferase nsp16; these interactions enhance nsp14 and nsp16 enzymatic activities. In terms of assembly, interacts with nsp7 and nsp8 to form the replication-transcription complex (RTC): nsp12, nsp7, two subunits of nsp8, and up to two subunits of nsp13. Interacts with nsp9. As to quaternary structure, interacts with nsp8 to form the replication-transcription complex (RTC): nsp12, nsp7, two subunits of nsp8, and up to two subunits of nsp13. It depends on Mn(2+) as a cofactor. Mg(2+) serves as cofactor. In terms of processing, specific enzymatic cleavages in vivo by its own proteases yield mature proteins. 3CL-PRO and PL-PRO proteinases are autocatalytically processed.

The protein localises to the host membrane. It is found in the host cytoplasm. The protein resides in the host perinuclear region. Its subcellular location is the host endoplasmic reticulum-Golgi intermediate compartment. It catalyses the reaction RNA(n) + a ribonucleoside 5'-triphosphate = RNA(n+1) + diphosphate. The enzyme catalyses ATP + H2O = ADP + phosphate + H(+). The catalysed reaction is Thiol-dependent hydrolysis of ester, thioester, amide, peptide and isopeptide bonds formed by the C-terminal Gly of ubiquitin (a 76-residue protein attached to proteins as an intracellular targeting signal).. It carries out the reaction a 5'-end (N(7)-methyl 5'-triphosphoguanosine)-ribonucleoside in mRNA + S-adenosyl-L-methionine = a 5'-end (N(7)-methyl 5'-triphosphoguanosine)-(2'-O-methyl-ribonucleoside) in mRNA + S-adenosyl-L-homocysteine + H(+). It catalyses the reaction uridylyl-uridylyl-ribonucleotide-RNA = a 3'-end uridylyl-2',3'-cyclophospho-uridine-RNA + a 5'-end dephospho-ribonucleoside-RNA. The enzyme catalyses a 5'-end diphospho-ribonucleoside in mRNA + GTP + H(+) = a 5'-end (5'-triphosphoguanosine)-ribonucleoside in mRNA + diphosphate. The catalysed reaction is a 5'-end (5'-triphosphoguanosine)-ribonucleoside in mRNA + S-adenosyl-L-methionine = a 5'-end (N(7)-methyl 5'-triphosphoguanosine)-ribonucleoside in mRNA + S-adenosyl-L-homocysteine. Its function is as follows. The replicase polyprotein of coronaviruses is a multifunctional protein: it contains the activities necessary for the transcription of negative stranded RNA, leader RNA, subgenomic mRNAs and progeny virion RNA as well as proteinases responsible for the cleavage of the polyprotein into functional products. Functionally, inhibits host translation by interacting with the 40S ribosomal subunit. The nsp1-40S ribosome complex further induces an endonucleolytic cleavage near the 5'UTR of host mRNAs, targeting them for degradation. Viral mRNAs are not susceptible to nsp1-mediated endonucleolytic RNA cleavage thanks to the presence of a 5'-end leader sequence and are therefore protected from degradation. By suppressing host gene expression, nsp1 facilitates efficient viral gene expression in infected cells and evasion from host immune response. May play a role in the modulation of host cell survival signaling pathway by interacting with host PHB and PHB2. Indeed, these two proteins play a role in maintaining the functional integrity of the mitochondria and protecting cells from various stresses. In terms of biological role, responsible for the cleavages located at the N-terminus of the replicase polyprotein. In addition, PL-PRO possesses a deubiquitinating/deISGylating activity and processes both 'Lys-48'- and 'Lys-63'-linked polyubiquitin chains from cellular substrates. Participates together with nsp4 in the assembly of virally-induced cytoplasmic double-membrane vesicles necessary for viral replication. Antagonizes innate immune induction of type I interferon by blocking the phosphorylation, dimerization and subsequent nuclear translocation of host IRF3. Also prevents host NF-kappa-B signaling. Its function is as follows. Participates in the assembly of virally-induced cytoplasmic double-membrane vesicles necessary for viral replication. Functionally, cleaves the C-terminus of replicase polyprotein at 11 sites. Recognizes substrates containing the core sequence [ILMVF]-Q-|-[SGACN]. Also able to bind an ADP-ribose-1''-phosphate (ADRP). Plays a role in the initial induction of autophagosomes from host endoplasmic reticulum. Later, limits the expansion of these phagosomes that are no longer able to deliver viral components to lysosomes. In terms of biological role, forms a hexadecamer with nsp8 (8 subunits of each) that may participate in viral replication by acting as a primase. Alternatively, may synthesize substantially longer products than oligonucleotide primers. Its function is as follows. Forms a hexadecamer with nsp7 (8 subunits of each) that may participate in viral replication by acting as a primase. Alternatively, may synthesize substantially longer products than oligonucleotide primers. Functionally, forms a primer, NSP9-pU, which is utilized by the polymerase for the initiation of RNA chains. Interacts with ribosome signal recognition particle RNA (SRP). Together with NSP8, suppress protein integration into the cell membrane, thereby disrupting host immune defenses. Plays a pivotal role in viral transcription by stimulating both nsp14 3'-5' exoribonuclease and nsp16 2'-O-methyltransferase activities. Therefore plays an essential role in viral mRNAs cap methylation. In terms of biological role, RNA-directed RNA polymerase that catalyzes the transcription of viral genomic and subgenomic RNAs. Acts in complex with nsp7 and nsp8 to transcribe both the minus and positive strands of genomic RNA. The kinase-like NiRAN domain of NSP12 attaches one or more nucleotides to the amino terminus of NSP9, forming a covalent RNA-protein intermediate that serves as transcription/replication primer. Subgenomic RNAs (sgRNAs) are formed by discontinuous transcription: The polymerase has the ability to pause at transcription-regulating sequences (TRS) and jump to the leader TRS, resulting in a major deletion. This creates a series of subgenomic RNAs that are replicated, transcribed and translated. In addition, Nsp12 is a subunit of the viral RNA capping enzyme that catalyzes the RNA guanylyltransferase reaction for genomic and sub-genomic RNAs. Subsequently, the NiRAN domain transfers RNA to GDP, and forms the core cap structure GpppA-RNA. Its function is as follows. Multi-functional protein with a zinc-binding domain in N-terminus displaying RNA and DNA duplex-unwinding activities with 5' to 3' polarity. Activity of helicase is dependent on magnesium. Functionally, plays a role in viral RNA synthesis through two distinct activities. The N7-guanine methyltransferase activity plays a role in the formation of the cap structure GpppA-RNA. The proofreading exoribonuclease reduces the sensitivity of the virus to RNA mutagens during replication. This activity acts on both ssRNA and dsRNA in a 3'-5' direction. Plays a role in viral transcription/replication and prevents the simultaneous activation of host cell dsRNA sensors, such as MDA5/IFIH1, OAS, and PKR. Acts by degrading the 5'-polyuridines generated during replication of the poly(A) region of viral genomic and subgenomic RNAs. Catalyzes a two-step reaction in which a 2'3'-cyclic phosphate (2'3'-cP) is first generated by 2'-O transesterification, which is then hydrolyzed to a 3'-phosphate (3'-P). If not degraded, poly(U) RNA would hybridize with poly(A) RNA tails and activate host dsRNA sensors. In terms of biological role, methyltransferase that mediates mRNA cap 2'-O-ribose methylation to the 5'-cap structure of viral mRNAs. N7-methyl guanosine cap is a prerequisite for binding of nsp16. Therefore plays an essential role in viral mRNAs cap methylation which is essential to evade immune system. This chain is Replicase polyprotein 1ab (rep), found in Bos taurus (Bovine).